We begin with the raw amino-acid sequence, 535 residues long: Inositol 1,4,5-trisphosphate receptor-interacting protein-like 2 (535 aa).

Positions methionine 1–serine 32 are cleaved as a signal peptide. Residues serine 33–glycine 43 lie on the Extracellular side of the membrane. Residues alanine 44 to leucine 64 traverse the membrane as a helical segment. The Cytoplasmic segment spans residues arginine 65 to proline 535. A Phosphoserine modification is found at serine 139.

This sequence belongs to the ITPRIP family.

The protein localises to the membrane. This is Inositol 1,4,5-trisphosphate receptor-interacting protein-like 2 (Itpripl2) from Mus musculus (Mouse).